The primary structure comprises 535 residues: Bifunctional purine biosynthesis protein PurH (535 aa).

In terms of domain architecture, MGS-like spans 1-145 (MAQTALISVS…KNWKDVGVLT (145 aa)).

This sequence belongs to the PurH family.

The catalysed reaction is (6R)-10-formyltetrahydrofolate + 5-amino-1-(5-phospho-beta-D-ribosyl)imidazole-4-carboxamide = 5-formamido-1-(5-phospho-D-ribosyl)imidazole-4-carboxamide + (6S)-5,6,7,8-tetrahydrofolate. It catalyses the reaction IMP + H2O = 5-formamido-1-(5-phospho-D-ribosyl)imidazole-4-carboxamide. Its pathway is purine metabolism; IMP biosynthesis via de novo pathway; 5-formamido-1-(5-phospho-D-ribosyl)imidazole-4-carboxamide from 5-amino-1-(5-phospho-D-ribosyl)imidazole-4-carboxamide (10-formyl THF route): step 1/1. The protein operates within purine metabolism; IMP biosynthesis via de novo pathway; IMP from 5-formamido-1-(5-phospho-D-ribosyl)imidazole-4-carboxamide: step 1/1. The protein is Bifunctional purine biosynthesis protein PurH of Variovorax paradoxus (strain S110).